The sequence spans 119 residues: Large ribosomal subunit protein uL18 (119 aa).

It belongs to the universal ribosomal protein uL18 family. As to quaternary structure, part of the 50S ribosomal subunit; part of the 5S rRNA/L5/L18/L25 subcomplex. Contacts the 5S and 23S rRNAs.

This is one of the proteins that bind and probably mediate the attachment of the 5S RNA into the large ribosomal subunit, where it forms part of the central protuberance. The polypeptide is Large ribosomal subunit protein uL18 (Ruegeria pomeroyi (strain ATCC 700808 / DSM 15171 / DSS-3) (Silicibacter pomeroyi)).